A 639-amino-acid chain; its full sequence is 3D-(3,5/4)-trihydroxycyclohexane-1,2-dione hydrolase (639 aa).

Glutamate 65 serves as a coordination point for thiamine diphosphate. The segment at 437–517 is thiamine pyrophosphate binding; sequence SLPGDLQRMW…INIILFDNSG (81 aa). Mg(2+) contacts are provided by aspartate 488 and asparagine 515.

It belongs to the TPP enzyme family. The cofactor is Mg(2+). Thiamine diphosphate serves as cofactor.

It carries out the reaction 3D-3,5/4-trihydroxycyclohexane-1,2-dione + H2O = 5-deoxy-D-glucuronate + H(+). It functions in the pathway polyol metabolism; myo-inositol degradation into acetyl-CoA; acetyl-CoA from myo-inositol: step 3/7. In terms of biological role, involved in the cleavage of the C1-C2 bond of 3D-(3,5/4)-trihydroxycyclohexane-1,2-dione (THcHDO) to yield 5-deoxy-glucuronate (5DG). The sequence is that of 3D-(3,5/4)-trihydroxycyclohexane-1,2-dione hydrolase from Geobacillus thermodenitrificans (strain NG80-2).